Reading from the N-terminus, the 91-residue chain is Tail assembly protein E (91 aa).

The protein belongs to the mulikevirus tail assembly protein family.

Its function is as follows. Promotes tail assembly by creating a scaffold for the tail tube proteins. Tail assembly proteins E and E' would wrap the linear tape measure protein to create a tail assembly scaffold. This is Tail assembly protein E from Escherichia phage P2 (Bacteriophage P2).